We begin with the raw amino-acid sequence, 44 residues long: Thrombin-like enzyme F202 (44 aa).

Residues 1–44 (VVGGDECNINEHRFLVALYANSSLLCGGTLINQEWVLIAAHCDR) form the Peptidase S1 domain. C26 and C42 form a disulfide bridge. Residue H41 is the Charge relay system of the active site.

Belongs to the peptidase S1 family. Snake venom subfamily. Monomer. Contains 6 disulfide bonds. As to expression, expressed by the venom gland.

The protein resides in the secreted. Its activity is regulated as follows. Enzyme activity is markedly inhibited by TLCK and PMSF, and moderately by SBTi. Platelet aggregating activity is strongly inhibited by TLCK. In terms of biological role, thrombin-like snake venom serine protease that coagulates fibrinogen by inducing a fast degradation of the alpha chain (FGA) from human citrated plasma, and a slow degradation of beta chain (FGB). Potently induces platelet aggregation in both platelet rich plasma and washed platelet preparations in a concentration-dependent fashion. Shows amidolytic activities. The protein is Thrombin-like enzyme F202 of Crotalus durissus cascavella (Northeastern Brazilian rattlesnake).